We begin with the raw amino-acid sequence, 721 residues long: BBSome complex member bbs-7 (721 aa).

As to quaternary structure, part of BBSome complex, that contains at least bbs-1, bbs-2, bbs-4, bbs-5, osm-12, bbs-8/ttc-8 and bbs-9. Interacts with bbs-1. As to expression, expressed in ciliated cells including amphid and both inner and outer labial neurons of the head and in both phasmid neurons PHA and PHB in the tail at larval stages L1 and L2.

Its subcellular location is the cell projection. It localises to the cilium. The protein localises to the cytoplasm. It is found in the cytoskeleton. The protein resides in the cilium basal body. Its subcellular location is the cilium axoneme. Functionally, component of the BBSome complex. The BBSome complex is thought to function as a coat complex required for sorting of specific membrane proteins to the primary cilia. The BBSome complex is required for ciliogenesis but is dispensable for centriolar satellite function. Required for proper BBSome complex assembly and its ciliary localization. Required for cilia biogenesis and both the assembly and movement of intraflagellar transport proteins along the ciliary axoneme. Plays a role in the removal of degraded mechanosensory receptors within the cilia. Plays a role in guanylyl cyclase localization in the ring-like structures at the base of the finger compartment in AFD sensory neurons. In ciliated sensory neurons, required for the sensation of nitric oxide and avoidance of NO-producing organisms like P.aeruginosa. This Caenorhabditis elegans protein is BBSome complex member bbs-7.